The primary structure comprises 380 residues: Ribosomal RNA large subunit methyltransferase G (380 aa).

The protein belongs to the methyltransferase superfamily. RlmG family.

The protein localises to the cytoplasm. It carries out the reaction guanosine(1835) in 23S rRNA + S-adenosyl-L-methionine = N(2)-methylguanosine(1835) in 23S rRNA + S-adenosyl-L-homocysteine + H(+). Its function is as follows. Specifically methylates the guanine in position 1835 (m2G1835) of 23S rRNA. The protein is Ribosomal RNA large subunit methyltransferase G of Streptomyces avermitilis (strain ATCC 31267 / DSM 46492 / JCM 5070 / NBRC 14893 / NCIMB 12804 / NRRL 8165 / MA-4680).